The primary structure comprises 569 residues: Synaptotagmin-4 (569 aa).

A helical transmembrane segment spans residues 1 to 21 (MGFLFGLFIGIAVSFGLVVAF). The SMP-LTD domain occupies 67 to 251 (QRQKLNWLNL…WPVRKIIPIL (185 aa)). The segment at 229 to 531 (EETIRDAIED…KIGRVIMTLT (303 aa)) is phospholipid binding. C2 domains are found at residues 245 to 366 (RKII…DIWL) and 426 to 543 (TDMK…QEWF). 5 residues coordinate Ca(2+): D459, D465, D514, D516, and D521.

It belongs to the synaptotagmin family. Ca(2+) serves as cofactor.

The protein localises to the membrane. May be involved in membrane trafficking. This chain is Synaptotagmin-4 (SYT4), found in Arabidopsis thaliana (Mouse-ear cress).